A 122-amino-acid chain; its full sequence is Large ribosomal subunit protein uL14 (122 aa).

It belongs to the universal ribosomal protein uL14 family. Part of the 50S ribosomal subunit. Forms a cluster with proteins L3 and L19. In the 70S ribosome, L14 and L19 interact and together make contacts with the 16S rRNA in bridges B5 and B8.

In terms of biological role, binds to 23S rRNA. Forms part of two intersubunit bridges in the 70S ribosome. The chain is Large ribosomal subunit protein uL14 from Desulfosudis oleivorans (strain DSM 6200 / JCM 39069 / Hxd3) (Desulfococcus oleovorans).